Here is a 292-residue protein sequence, read N- to C-terminus: Acetylglutamate kinase (292 aa).

Substrate contacts are provided by residues G64–G65, R86, and N190.

It belongs to the acetylglutamate kinase family. ArgB subfamily.

The protein resides in the cytoplasm. The catalysed reaction is N-acetyl-L-glutamate + ATP = N-acetyl-L-glutamyl 5-phosphate + ADP. It functions in the pathway amino-acid biosynthesis; L-arginine biosynthesis; N(2)-acetyl-L-ornithine from L-glutamate: step 2/4. Functionally, catalyzes the ATP-dependent phosphorylation of N-acetyl-L-glutamate. This chain is Acetylglutamate kinase, found in Pelobacter propionicus (strain DSM 2379 / NBRC 103807 / OttBd1).